Here is a 311-residue protein sequence, read N- to C-terminus: DNA replication terminus site-binding protein (311 aa).

This sequence belongs to the Tus family.

The protein resides in the cytoplasm. Functionally, trans-acting protein required for termination of DNA replication. Binds to DNA replication terminator sequences (terA to terF) to prevent the passage of replication forks. The termination efficiency will be affected by the affinity of this protein for the terminator sequence. The sequence is that of DNA replication terminus site-binding protein from Yersinia pseudotuberculosis serotype I (strain IP32953).